We begin with the raw amino-acid sequence, 457 residues long: tRNA modification GTPase MnmE (457 aa).

Residues Arg23, Glu85, and Arg124 each coordinate (6S)-5-formyl-5,6,7,8-tetrahydrofolate. One can recognise a TrmE-type G domain in the interval 220–376 (GALVVLAGQV…LVTAIRAAVL (157 aa)). Asn230 contacts K(+). Residues 230–235 (NAGKSS), 249–255 (TDLPGTT), and 274–277 (DTAG) each bind GTP. Ser234 is a Mg(2+) binding site. K(+) contacts are provided by Thr249, Leu251, and Thr254. Thr255 contributes to the Mg(2+) binding site. Lys457 lines the (6S)-5-formyl-5,6,7,8-tetrahydrofolate pocket.

This sequence belongs to the TRAFAC class TrmE-Era-EngA-EngB-Septin-like GTPase superfamily. TrmE GTPase family. Homodimer. Heterotetramer of two MnmE and two MnmG subunits. It depends on K(+) as a cofactor.

It is found in the cytoplasm. Functionally, exhibits a very high intrinsic GTPase hydrolysis rate. Involved in the addition of a carboxymethylaminomethyl (cmnm) group at the wobble position (U34) of certain tRNAs, forming tRNA-cmnm(5)s(2)U34. The chain is tRNA modification GTPase MnmE from Nitratidesulfovibrio vulgaris (strain DP4) (Desulfovibrio vulgaris).